The sequence spans 478 residues: Dihydrolipoyl dehydrogenase (478 aa).

FAD contacts are provided by residues 36–45 (ERYSTLGGVC), Lys54, and Ala117. A disulfide bond links Cys45 and Cys50. Residues 183–187 (GGGII), Glu206, Val239, and 270–273 (AIGR) each bind NAD(+). Positions 313 and 321 each coordinate FAD. His445 functions as the Proton acceptor in the catalytic mechanism.

It belongs to the class-I pyridine nucleotide-disulfide oxidoreductase family. As to quaternary structure, homodimer. Requires FAD as cofactor.

The protein localises to the cytoplasm. The catalysed reaction is N(6)-[(R)-dihydrolipoyl]-L-lysyl-[protein] + NAD(+) = N(6)-[(R)-lipoyl]-L-lysyl-[protein] + NADH + H(+). Functionally, lipoamide dehydrogenase is a component of the alpha-ketoacid dehydrogenase complexes. The sequence is that of Dihydrolipoyl dehydrogenase (lpdA) from Haemophilus influenzae (strain ATCC 51907 / DSM 11121 / KW20 / Rd).